The following is a 384-amino-acid chain: Succinyl-diaminopimelate desuccinylase (384 aa).

H69 is a binding site for Zn(2+). D71 is a catalytic residue. Zn(2+) is bound at residue D103. E137 serves as the catalytic Proton acceptor. E138, E166, and H355 together coordinate Zn(2+).

This sequence belongs to the peptidase M20A family. DapE subfamily. As to quaternary structure, homodimer. Zn(2+) serves as cofactor. Requires Co(2+) as cofactor.

It carries out the reaction N-succinyl-(2S,6S)-2,6-diaminopimelate + H2O = (2S,6S)-2,6-diaminopimelate + succinate. Its pathway is amino-acid biosynthesis; L-lysine biosynthesis via DAP pathway; LL-2,6-diaminopimelate from (S)-tetrahydrodipicolinate (succinylase route): step 3/3. In terms of biological role, catalyzes the hydrolysis of N-succinyl-L,L-diaminopimelic acid (SDAP), forming succinate and LL-2,6-diaminopimelate (DAP), an intermediate involved in the bacterial biosynthesis of lysine and meso-diaminopimelic acid, an essential component of bacterial cell walls. The chain is Succinyl-diaminopimelate desuccinylase from Rickettsia canadensis (strain McKiel).